We begin with the raw amino-acid sequence, 185 residues long: Ribosome-recycling factor (185 aa).

It belongs to the RRF family.

The protein resides in the cytoplasm. Functionally, responsible for the release of ribosomes from messenger RNA at the termination of protein biosynthesis. May increase the efficiency of translation by recycling ribosomes from one round of translation to another. The chain is Ribosome-recycling factor from Mycobacterium leprae (strain Br4923).